Here is a 335-residue protein sequence, read N- to C-terminus: NADH-quinone oxidoreductase subunit H (335 aa).

Transmembrane regions (helical) follow at residues 12-32 (IIAVVKAIVVLLAVVVCGALL), 81-101 (VIFTLAPVVAMSALLIAFAVI), 114-134 (IGLLFFFAMAGLSVYAVLFAG), 154-174 (VSYEVFMGLALMGIVVQVGSF), 187-207 (LWFIIPQFFGFCTFFIAGVAV), 238-258 (FFVGEYIGIILISALLVTLFF), 270-290 (SLAFFWFALKTAFFIMLFILL), and 307-327 (WKFCLPLTLINLLVTAAIVLL).

The protein belongs to the complex I subunit 1 family. As to quaternary structure, NDH-1 is composed of 13 different subunits. Subunits NuoA, H, J, K, L, M, N constitute the membrane sector of the complex.

It is found in the cell inner membrane. It catalyses the reaction a quinone + NADH + 5 H(+)(in) = a quinol + NAD(+) + 4 H(+)(out). Its function is as follows. NDH-1 shuttles electrons from NADH, via FMN and iron-sulfur (Fe-S) centers, to quinones in the respiratory chain. The immediate electron acceptor for the enzyme in this species is believed to be ubiquinone. Couples the redox reaction to proton translocation (for every two electrons transferred, four hydrogen ions are translocated across the cytoplasmic membrane), and thus conserves the redox energy in a proton gradient. This subunit may bind ubiquinone. The polypeptide is NADH-quinone oxidoreductase subunit H (Pseudomonas syringae pv. tomato (strain ATCC BAA-871 / DC3000)).